A 472-amino-acid chain; its full sequence is Relaxin-3 receptor 1 (472 aa).

The Extracellular portion of the chain corresponds to 1-81; the sequence is MQVASATPAA…ESTDTEARVR (81 aa). Residues asparagine 36 and asparagine 40 are each glycosylated (N-linked (GlcNAc...) asparagine). Residues 82–102 traverse the membrane as a helical segment; that stretch reads ILISAVYWVVCALGLAGNLLV. Residues 103–119 are Cytoplasmic-facing; it reads LYLMKSKQGWRKSSINL. The chain crosses the membrane as a helical span at residues 120–140; it reads FVTNLALTDFQFVLTLPFWAV. Over 141-156 the chain is Extracellular; that stretch reads ENALDFKWPFGKAMCK. An intrachain disulfide couples cysteine 155 to cysteine 247. Residues 157–177 traverse the membrane as a helical segment; sequence IVSMVTSMNMYASVFFLTAMS. Residues 178-215 lie on the Cytoplasmic side of the membrane; the sequence is VARYHSVASALKSHRTRGRGRGDCCGQSLRESCCFSAK. Residues 216–236 traverse the membrane as a helical segment; the sequence is VLCGLIWASAALASLPNAIFS. Residues 237–270 lie on the Extracellular side of the membrane; that stretch reads TTIRVLGEELCLMHFPDKLLGWDRQFWLGLYHLQ. Residues 271–291 form a helical membrane-spanning segment; sequence KVLLGFLLPLSIISLCYLLLV. The Cytoplasmic portion of the chain corresponds to 292-298; the sequence is RFISDRR. Residues 299 to 319 form a helical membrane-spanning segment; sequence VVGTTDAVGAAAAPGGGLSTA. Residues 320–332 lie on the Extracellular side of the membrane; it reads SARRRSKVTKSVT. The helical transmembrane segment at 333-353 threads the bilayer; that stretch reads IVVLSFFLCWLPNQALTTWSI. Over 354–472 the chain is Cytoplasmic; that stretch reads LIKFNAVPFS…YDLLPSSSAY (119 aa).

The protein belongs to the G-protein coupled receptor 1 family.

The protein localises to the cell membrane. Its function is as follows. Receptor for RNL3/relaxin-3. Binding of the ligand inhibit cAMP accumulation. In Mus musculus (Mouse), this protein is Relaxin-3 receptor 1 (Rxfp3).